The following is a 315-amino-acid chain: Olfactory receptor 5AN6 (315 aa).

At 1–29 (MPGGRNSTVITKFILVGFSDFPKLKLVLF) the chain is on the extracellular side. A helical transmembrane segment spans residues 30–50 (VIFLGSYLSTVVWNLGLIILI). Over 51-54 (RIDP) the chain is Cytoplasmic. Residues 55–75 (YLHTPMYFFLSNLSFLDFCYI) traverse the membrane as a helical segment. At 76-99 (SSTTPKMLSGFFQKSKSISFVGCT) the chain is on the extracellular side. Cysteine 98 and cysteine 180 are disulfide-bonded. A helical transmembrane segment spans residues 100-120 (MQYFIFSSLGLSECCLLAAMA). Over 121 to 123 (YDR) the chain is Cytoplasmic. A helical transmembrane segment spans residues 124-143 (YAAICNPLLYTAIMSPSLCV). Residue histidine 144 is a topological domain, extracellular. A helical membrane pass occupies residues 145–165 (MVVGAYSTGLLGSLIQLCAIL). The Cytoplasmic segment spans residues 166-202 (QLHFCGPNIINHFFCDLPQLLVLSCSETFPLQVLKFV). The chain crosses the membrane as a helical span at residues 203–223 (IAVIFGVASVIVILISYGYII). The Extracellular segment spans residues 224-240 (GTILNISSVEGRSKAFN). Residues 241–261 (TCASHLTAVTLFFGSGLFVYM) traverse the membrane as a helical segment. Topologically, residues 262–272 (RPSSNSSQGYD) are cytoplasmic. Residues 273 to 293 (KMASVFYTVVIPMLNPLIYSL) traverse the membrane as a helical segment. At 294 to 315 (RNKEIKDALQRCKNKCFSQCHC) the chain is on the extracellular side.

This sequence belongs to the G-protein coupled receptor 1 family. As to expression, localized in the dorsomedial and ventral region of the olfactory bulb.

Its subcellular location is the cell membrane. Its function is as follows. Odorant receptor specific for muscone. Muscone-binding causes a conformation change that triggers signaling via G(s)-class of G alpha protein GNAL, activating adenylyl cyclase. This Mus musculus (Mouse) protein is Olfactory receptor 5AN6.